The primary structure comprises 485 residues: UDP-N-acetylmuramate--L-alanine ligase (485 aa).

112–118 (GTHGKTT) serves as a coordination point for ATP.

The protein belongs to the MurCDEF family.

It is found in the cytoplasm. It catalyses the reaction UDP-N-acetyl-alpha-D-muramate + L-alanine + ATP = UDP-N-acetyl-alpha-D-muramoyl-L-alanine + ADP + phosphate + H(+). It functions in the pathway cell wall biogenesis; peptidoglycan biosynthesis. Its function is as follows. Cell wall formation. This chain is UDP-N-acetylmuramate--L-alanine ligase, found in Variovorax paradoxus (strain S110).